The following is a 323-amino-acid chain: Cobalamin biosynthesis protein CobD (323 aa).

A run of 5 helical transmembrane segments spans residues 52-72, 73-93, 154-174, 214-234, and 294-314; these read IAGVLLLALTVTSAASVTWLM, VWGSARLHALAGLMVAALLSS, DGIIAPLFWLALGGPVAGMAF, ALLMVMVAPLIGLSQANAASI, and IRLMYATTLAMAVISLATAAL.

Belongs to the CobD/CbiB family.

The protein resides in the cell membrane. Its pathway is cofactor biosynthesis; adenosylcobalamin biosynthesis. Converts cobyric acid to cobinamide by the addition of aminopropanol on the F carboxylic group. This is Cobalamin biosynthesis protein CobD from Pelobacter propionicus (strain DSM 2379 / NBRC 103807 / OttBd1).